Reading from the N-terminus, the 398-residue chain is Growth-regulating factor 3 (398 aa).

The segment covering 1–17 (MDLQLKQWRSQQQQQHQ) has biased composition (low complexity). Positions 1–32 (MDLQLKQWRSQQQQQHQTESEEQPSAAKIPKH) are disordered. One can recognise a QLQ domain in the interval 76-111 (FFSWAQWQELELQALIYRYMLAGAAVPQELLLPIKK). Residues 144–188 (DPEPGRCRRTDGKKWRCSRDVFAGHKYCERHMHRGRNRSRKPVET) form the WRC domain. 2 short sequence motifs (bipartite nuclear localization signal) span residues 149–159 (RCRRTDGKKWR) and 177–184 (RGRNRSRK). Composition is skewed to polar residues over residues 299 to 350 (SLQE…RDQQ) and 383 to 398 (PTSV…QAFH). Residues 299 to 398 (SLQEADNSSS…QLGVSTQAFH (100 aa)) form a disordered region.

The protein belongs to the GRF family. In terms of tissue distribution, strongly expressed in actively growing and developing tissues, such as roots, upper stems, and shoot tips containing the shoot apical meristem (SAM) and flower buds. Also expressed in mature flowers, but weakly expressed in mature stems and leaves.

It localises to the nucleus. Its function is as follows. Transcription activator that plays a role in the regulation of cell expansion in leaf and cotyledons tissues. Component of a network formed by miR396, the GRFs and their interacting factors (GIFs) acting in the regulation of meristem function, at least partially through the control of cell proliferation. microRNA396-GRF1/GRF3 regulatory module acts as a developmental regulator in the reprogramming of root cells during cyst nematode infection, leading to the formation of the syncytium. This chain is Growth-regulating factor 3 (GRF3), found in Arabidopsis thaliana (Mouse-ear cress).